A 425-amino-acid chain; its full sequence is Dual-specificity RNA methyltransferase RlmN (425 aa).

Glutamate 136 serves as the catalytic Proton acceptor. The region spanning 142–389 (GDDRGTLCVS…VRTPRGRDIL (248 aa)) is the Radical SAM core domain. Cysteines 149 and 392 form a disulfide. Cysteine 156, cysteine 160, and cysteine 163 together coordinate [4Fe-4S] cluster. S-adenosyl-L-methionine contacts are provided by residues 218–219 (GE), serine 250, 272–274 (SLH), and asparagine 349. Cysteine 392 serves as the catalytic S-methylcysteine intermediate.

It belongs to the radical SAM superfamily. RlmN family. [4Fe-4S] cluster is required as a cofactor.

The protein localises to the cytoplasm. It carries out the reaction adenosine(2503) in 23S rRNA + 2 reduced [2Fe-2S]-[ferredoxin] + 2 S-adenosyl-L-methionine = 2-methyladenosine(2503) in 23S rRNA + 5'-deoxyadenosine + L-methionine + 2 oxidized [2Fe-2S]-[ferredoxin] + S-adenosyl-L-homocysteine. The enzyme catalyses adenosine(37) in tRNA + 2 reduced [2Fe-2S]-[ferredoxin] + 2 S-adenosyl-L-methionine = 2-methyladenosine(37) in tRNA + 5'-deoxyadenosine + L-methionine + 2 oxidized [2Fe-2S]-[ferredoxin] + S-adenosyl-L-homocysteine. Functionally, specifically methylates position 2 of adenine 2503 in 23S rRNA and position 2 of adenine 37 in tRNAs. m2A2503 modification seems to play a crucial role in the proofreading step occurring at the peptidyl transferase center and thus would serve to optimize ribosomal fidelity. In Methylorubrum populi (strain ATCC BAA-705 / NCIMB 13946 / BJ001) (Methylobacterium populi), this protein is Dual-specificity RNA methyltransferase RlmN.